The chain runs to 1581 residues: Laminin subunit gamma-3 (1581 aa).

An N-terminal signal peptide occupies residues 1-28 (MAVSRVLSLLATVASMALVIQETHFAAG). The 240-residue stretch at 40 to 279 (RAQRCLPEFE…AVSDFSVGGR (240 aa)) folds into the Laminin N-terminal domain. The N-linked (GlcNAc...) asparagine glycan is linked to Asn128. 16 disulfides stabilise this stretch: Cys280/Cys289, Cys282/Cys299, Cys301/Cys310, Cys313/Cys333, Cys336/Cys345, Cys338/Cys361, Cys364/Cys373, Cys376/Cys389, Cys392/Cys404, Cys394/Cys410, Cys412/Cys421, Cys424/Cys436, Cys439/Cys450, Cys441/Cys457, Cys459/Cys468, and Cys471/Cys486. Laminin EGF-like domains are found at residues 280 to 335 (CKCN…ECLP), 336 to 391 (CNCS…PCQP), 392 to 438 (CDCH…GCRP), and 439 to 488 (CACN…GCSS). A glycan (N-linked (GlcNAc...) asparagine) is linked at Asn304. The N-linked (GlcNAc...) asparagine glycan is linked to Asn337. One can recognise a Laminin EGF-like 5; first part domain in the interval 489-498 (CFCYGHSKVC). The 177-residue stretch at 508–684 (HIRSDFRHGA…LAPPASWVET (177 aa)) folds into the Laminin IV type A domain. A glycan (N-linked (GlcNAc...) asparagine) is linked at Asn640. Residues 685–718 (CLCPQGYTGQFCEFCALGYKREIPHGGPYANCIP) form the Laminin EGF-like 5; second part domain. Disulfide bonds link Cys719/Cys727, Cys721/Cys734, Cys736/Cys745, Cys748/Cys764, Cys767/Cys775, Cys769/Cys786, Cys789/Cys798, Cys801/Cys819, Cys822/Cys836, Cys824/Cys843, Cys846/Cys855, Cys858/Cys875, Cys878/Cys891, Cys880/Cys898, Cys900/Cys909, Cys912/Cys925, Cys928/Cys940, Cys930/Cys947, Cys949/Cys958, Cys961/Cys973, Cys976/Cys988, Cys978/Cys994, Cys996/Cys1005, and Cys1008/Cys1021. Laminin EGF-like domains lie at 719–766 (CTCN…DCQP), 767–821 (CPCP…PCRR), 822–877 (CQCS…KCAP), 878–927 (CSCD…GCQS), 928–975 (CKCH…GCRD), and 976–1024 (CRCS…CQEC). A glycan (N-linked (GlcNAc...) asparagine) is linked at Asn849. A glycan (N-linked (GlcNAc...) asparagine) is linked at Asn991. Residues 1025-1581 (PTCYALVKEE…LSSLPENCAS (557 aa)) are domain II and I. 2 coiled-coil regions span residues 1029–1046 (ALVKEEAAKLKARLMLME) and 1112–1153 (VHCA…LASL). Residues Asn1162 and Asn1196 are each glycosylated (N-linked (GlcNAc...) asparagine). Residues 1208–1231 (RVASEAQQELEDRYQEVQAAQTAL) adopt a coiled-coil conformation. N-linked (GlcNAc...) asparagine glycosylation is present at Asn1320. The tract at residues 1382–1413 (KRKTKQAERMLGNAASLSSSTKKKSKEAELMS) is disordered. 2 coiled-coil regions span residues 1438–1468 (ASQTQATLRRASRLLLTSEAHKQELEEAKQV) and 1510–1575 (AQTL…LSSL). Residue Asn1514 is glycosylated (N-linked (GlcNAc...) asparagine).

In terms of assembly, laminin is a complex glycoprotein, consisting of three different polypeptide chains (alpha, beta, gamma), which are bound to each other by disulfide bonds into a cross-shaped molecule comprising one long and three short arms with globules at each end. Gamma-3 is a subunit of laminin-12 (laminin-213), laminin-14 (laminin-423) and laminin-15 (laminin-523). In terms of tissue distribution, strongly expressed in capillaries and arterioles of kidney as well as in interstitial Leydig cells of testis.

It is found in the secreted. It localises to the extracellular space. The protein localises to the extracellular matrix. The protein resides in the basement membrane. Binding to cells via a high affinity receptor, laminin is thought to mediate the attachment, migration and organization of cells into tissues during embryonic development by interacting with other extracellular matrix components. The chain is Laminin subunit gamma-3 (Lamc3) from Mus musculus (Mouse).